A 347-amino-acid chain; its full sequence is Protein RecA (347 aa).

Gly-80–Thr-87 is an ATP binding site.

It belongs to the RecA family.

Its subcellular location is the cytoplasm. In terms of biological role, can catalyze the hydrolysis of ATP in the presence of single-stranded DNA, the ATP-dependent uptake of single-stranded DNA by duplex DNA, and the ATP-dependent hybridization of homologous single-stranded DNAs. It interacts with LexA causing its activation and leading to its autocatalytic cleavage. The polypeptide is Protein RecA (Chlorobaculum parvum (strain DSM 263 / NCIMB 8327) (Chlorobium vibrioforme subsp. thiosulfatophilum)).